The chain runs to 262 residues: Acyl-[acyl-carrier-protein]--UDP-N-acetylglucosamine O-acyltransferase (262 aa).

It belongs to the transferase hexapeptide repeat family. LpxA subfamily. Homotrimer.

It is found in the cytoplasm. It carries out the reaction a (3R)-hydroxyacyl-[ACP] + UDP-N-acetyl-alpha-D-glucosamine = a UDP-3-O-[(3R)-3-hydroxyacyl]-N-acetyl-alpha-D-glucosamine + holo-[ACP]. The protein operates within glycolipid biosynthesis; lipid IV(A) biosynthesis; lipid IV(A) from (3R)-3-hydroxytetradecanoyl-[acyl-carrier-protein] and UDP-N-acetyl-alpha-D-glucosamine: step 1/6. Functionally, involved in the biosynthesis of lipid A, a phosphorylated glycolipid that anchors the lipopolysaccharide to the outer membrane of the cell. This chain is Acyl-[acyl-carrier-protein]--UDP-N-acetylglucosamine O-acyltransferase, found in Shigella flexneri serotype 5b (strain 8401).